The following is a 503-amino-acid chain: Trehalose-6-phosphate synthase (503 aa).

D-glucose 6-phosphate is bound at residue Arg22. Position 42-43 (42-43) interacts with UDP-alpha-D-glucose; that stretch reads GG. Positions 94 and 148 each coordinate D-glucose 6-phosphate. The UDP-alpha-D-glucose site is built by Arg290 and Lys295. D-glucose 6-phosphate is bound at residue Arg328. UDP-alpha-D-glucose is bound at residue 393-397; it reads LVAKE. The segment at 481–503 is disordered; it reads GETGDSGVTGESTPAPESDSGSF.

Belongs to the glycosyltransferase 20 family. As to quaternary structure, homotetramer.

It carries out the reaction ADP-alpha-D-glucose + D-glucose 6-phosphate = alpha,alpha-trehalose 6-phosphate + ADP + H(+). It catalyses the reaction CDP-alpha-D-glucose + D-glucose 6-phosphate = alpha,alpha-trehalose 6-phosphate + CDP + H(+). The enzyme catalyses GDP-alpha-D-glucose + D-glucose 6-phosphate = alpha,alpha-trehalose 6-phosphate + GDP + H(+). The catalysed reaction is TDP-alpha-D-glucose + D-glucose 6-phosphate = 5-methyl-UDP + alpha,alpha-trehalose 6-phosphate + H(+). It carries out the reaction D-glucose 6-phosphate + UDP-alpha-D-glucose = alpha,alpha-trehalose 6-phosphate + UDP + H(+). It participates in glycan biosynthesis; trehalose biosynthesis. Stimulated by the polynucleotide FII (physiological activator), and by chondroitin sulfate (CS) and heparin. Activation by the polyanion is inhibited by high salt concentration as well as by high concentrations of mononucleoside phosphates. Its function is as follows. Involved in the production of glycogen and alpha-glucan via the TreS-Pep2 branch involved in the biosynthesis of maltose-1-phosphate (M1P), and probably in the osmoprotection via the biosynthesis of trehalose. Catalyzes the transfer of glucose from UDP-glucose (UDP-Glc) to glucose-6-phosphate (Glc-6-P) to form trehalose-6-phosphate. ADP-Glc, CDP-Glc, GDP-Glc and TDP-Glc are also glucosyl donors, however, when the pyrimidine sugar nucleotides (CDP-Glc, TDP-Glc and UDP-Glc) are used as substrates, there is an absolute requirement for a high molecular weight polyanion for activity. This Mycolicibacterium smegmatis (strain ATCC 700084 / mc(2)155) (Mycobacterium smegmatis) protein is Trehalose-6-phosphate synthase.